We begin with the raw amino-acid sequence, 398 residues long: Lipoyl synthase, mitochondrial (398 aa).

The transit peptide at 1–32 (MIALRVHNTRVVSRSLTVWTRPSPTLTLSRSL) directs the protein to the mitochondrion. Residues C117, C122, C128, C147, C151, C154, and S362 each coordinate [4Fe-4S] cluster. Residues 132–351 (KKSEATATIM…RDTALEMGFL (220 aa)) enclose the Radical SAM core domain.

Belongs to the radical SAM superfamily. Lipoyl synthase family. Requires [4Fe-4S] cluster as cofactor.

Its subcellular location is the mitochondrion. It carries out the reaction [[Fe-S] cluster scaffold protein carrying a second [4Fe-4S](2+) cluster] + N(6)-octanoyl-L-lysyl-[protein] + 2 oxidized [2Fe-2S]-[ferredoxin] + 2 S-adenosyl-L-methionine + 4 H(+) = [[Fe-S] cluster scaffold protein] + N(6)-[(R)-dihydrolipoyl]-L-lysyl-[protein] + 4 Fe(3+) + 2 hydrogen sulfide + 2 5'-deoxyadenosine + 2 L-methionine + 2 reduced [2Fe-2S]-[ferredoxin]. The protein operates within protein modification; protein lipoylation via endogenous pathway; protein N(6)-(lipoyl)lysine from octanoyl-[acyl-carrier-protein]: step 2/2. Its function is as follows. Catalyzes the radical-mediated insertion of two sulfur atoms into the C-6 and C-8 positions of the octanoyl moiety bound to the lipoyl domains of lipoate-dependent enzymes, thereby converting the octanoylated domains into lipoylated derivatives. This chain is Lipoyl synthase, mitochondrial, found in Scheffersomyces stipitis (strain ATCC 58785 / CBS 6054 / NBRC 10063 / NRRL Y-11545) (Yeast).